Consider the following 145-residue polypeptide: 3-dehydroquinate dehydratase (145 aa).

Y23 functions as the Proton acceptor in the catalytic mechanism. N75, H81, and D88 together coordinate substrate. H101 functions as the Proton donor in the catalytic mechanism. Substrate-binding positions include 102–103 (IS) and R112.

This sequence belongs to the type-II 3-dehydroquinase family. As to quaternary structure, homododecamer.

It catalyses the reaction 3-dehydroquinate = 3-dehydroshikimate + H2O. It participates in metabolic intermediate biosynthesis; chorismate biosynthesis; chorismate from D-erythrose 4-phosphate and phosphoenolpyruvate: step 3/7. Functionally, catalyzes a trans-dehydration via an enolate intermediate. This is 3-dehydroquinate dehydratase from Caldicellulosiruptor bescii (strain ATCC BAA-1888 / DSM 6725 / KCTC 15123 / Z-1320) (Anaerocellum thermophilum).